Here is a 178-residue protein sequence, read N- to C-terminus: UPF0114 protein in repA1-repA2 intergenic region (178 aa).

The next 3 membrane-spanning stretches (helical) occupy residues 14 to 34, 53 to 73, and 136 to 156; these read WLIFPIYLGLSFCLILLTLKF, LILVILSLIDIVLVGGLLVMV, and WYVIIHLTFVVSAGGMAYIDR.

Belongs to the UPF0114 family.

It is found in the cell membrane. This chain is UPF0114 protein in repA1-repA2 intergenic region, found in Buchnera aphidicola subsp. Tetraneura caerulescens.